The primary structure comprises 184 residues: uncharacterized protein (184 aa).

A helical transmembrane segment spans residues 35–55 (LSFLIYILYTFSISGLSTFVI).

It localises to the membrane. This is an uncharacterized protein from Schizosaccharomyces pombe (strain 972 / ATCC 24843) (Fission yeast).